The primary structure comprises 441 residues: Mitochondrial distribution and morphology protein 12 (441 aa).

In terms of domain architecture, SMP-LTD spans 1-441 (MSIDIDWERA…VYPSFWTFLV (441 aa)). Disordered regions lie at residues 70–89 (YEDGDEDLSVSSEEQSPMRE) and 180–289 (TPLR…RMRE). Polar residues-rich tracts occupy residues 226–245 (SRPSTVNTGNTLFSRGSVST) and 253–263 (SSQTVLANNPG).

Belongs to the MDM12 family. As to quaternary structure, component of the ER-mitochondria encounter structure (ERMES) or MDM complex, composed of MMM1, MDM10, MDM12 and MDM34. An MMM1 homodimer associates with one molecule of MDM12 on each side in a pairwise head-to-tail manner, and the SMP-LTD domains of MMM1 and MDM12 generate a continuous hydrophobic tunnel for phospholipid trafficking.

It localises to the mitochondrion outer membrane. It is found in the endoplasmic reticulum membrane. Component of the ERMES/MDM complex, which serves as a molecular tether to connect the endoplasmic reticulum (ER) and mitochondria. Components of this complex are involved in the control of mitochondrial shape and protein biogenesis, and function in nonvesicular lipid trafficking between the ER and mitochondria. MDM12 is required for the interaction of the ER-resident membrane protein MMM1 and the outer mitochondrial membrane-resident beta-barrel protein MDM10. The MDM12-MMM1 subcomplex functions in the major beta-barrel assembly pathway that is responsible for biogenesis of all mitochondrial outer membrane beta-barrel proteins, and acts in a late step after the SAM complex. The MDM10-MDM12-MMM1 subcomplex further acts in the TOM40-specific pathway after the action of the MDM12-MMM1 complex. Essential for establishing and maintaining the structure of mitochondria and maintenance of mtDNA nucleoids. The sequence is that of Mitochondrial distribution and morphology protein 12 from Paracoccidioides brasiliensis (strain Pb03).